Here is a 513-residue protein sequence, read N- to C-terminus: Activin receptor type-2A (513 aa).

The first 19 residues, 1–19, serve as a signal peptide directing secretion; that stretch reads MGAAAKLAFAVFLISCSSG. The Extracellular portion of the chain corresponds to 20-135; that stretch reads AILGRSETQE…TSNPVTPKPP (116 aa). Disulfide bonds link Cys30-Cys60, Cys50-Cys78, Cys85-Cys104, Cys91-Cys103, and Cys105-Cys110. N-linked (GlcNAc...) asparagine glycosylation is found at Asn43 and Asn66. A helical transmembrane segment spans residues 136-161; it reads YYNILLYSLVPLMLVAGIVICAFWVY. The Cytoplasmic portion of the chain corresponds to 162–513; that stretch reads RHHKMAYPPV…VDFPPKESSL (352 aa). Residues 192-485 enclose the Protein kinase domain; sequence LQLLEVKARG…GERITQMQRL (294 aa). Residues 198–206 and Lys219 contribute to the ATP site; that span reads KARGGFGCV. Asp322 serves as the catalytic Proton acceptor.

The protein belongs to the protein kinase superfamily. TKL Ser/Thr protein kinase family. TGFB receptor subfamily. Part of a complex consisting of MAGI2/ARIP1, ACVR2A, ACVR1B and SMAD3. Interacts with MAGI2/ARIP1. Interacts with type I receptor ACVR1. Interacts with TSC22D1/TSC-22. Interacts with activin A/INHBA. Requires Mg(2+) as cofactor. Mn(2+) is required as a cofactor.

The protein localises to the cell membrane. It carries out the reaction L-threonyl-[receptor-protein] + ATP = O-phospho-L-threonyl-[receptor-protein] + ADP + H(+). The enzyme catalyses L-seryl-[receptor-protein] + ATP = O-phospho-L-seryl-[receptor-protein] + ADP + H(+). On ligand binding, forms a receptor complex consisting of two type II and two type I transmembrane serine/threonine kinases. Type II receptors phosphorylate and activate type I receptors which autophosphorylate, then bind and activate SMAD transcriptional regulators. Receptor for activin A, activin B and inhibin A. Mediates induction of adipogenesis by GDF6. The chain is Activin receptor type-2A (ACVR2A) from Ovis aries (Sheep).